Consider the following 325-residue polypeptide: Olfactory receptor 10AC1 (325 aa).

Topologically, residues 1 to 26 (MDSPSNATVPCGFLLQGFSEFPHLRP) are extracellular. Asn-6 carries an N-linked (GlcNAc...) asparagine glycan. A helical membrane pass occupies residues 27 to 47 (VLFLLLLGVHLATLGGNLLIL). The Cytoplasmic portion of the chain corresponds to 48-57 (VAVASMPSRQ). A helical membrane pass occupies residues 58 to 78 (PMLLFLCQLSAIELCYTLVVV). The Extracellular segment spans residues 79–101 (PRSLVDLSTPGHRRGSPISFLSC). A helical membrane pass occupies residues 102–122 (AFQMQMFVALGGAECFLLAAM). The Cytoplasmic segment spans residues 123 to 147 (AYDRYVAICHPLRYAAVVTPGLCAR). The helical transmembrane segment at 148-168 (LALACCLRGLAVSVGLTVAIF) threads the bilayer. Topologically, residues 169 to 171 (HLP) are extracellular. The helical transmembrane segment at 172–192 (FCGSRLLLHFFCDITALLHLA) threads the bilayer. Residues 193–200 (CTRSYADE) are Cytoplasmic-facing. Residues 201–221 (LPLLGACLVLLLLPSVLILAS) form a helical membrane-spanning segment. Over 222–243 (YGAIAAALRRLRCPKGRGKAAS) the chain is Extracellular. A helical membrane pass occupies residues 244–264 (TCALHLAVTFLHYGCATFMYV). Topologically, residues 265-325 (RPRASYSPRL…QAPGGDLREL (61 aa)) are cytoplasmic.

Belongs to the G-protein coupled receptor 1 family.

It localises to the cell membrane. In terms of biological role, odorant receptor. This Homo sapiens (Human) protein is Olfactory receptor 10AC1 (OR10AC1).